The primary structure comprises 102 residues: Large ribosomal subunit protein bL36m (102 aa).

It belongs to the bacterial ribosomal protein bL36 family. As to quaternary structure, component of the mitochondrial ribosome large subunit (39S) which comprises a 16S rRNA and about 50 distinct proteins.

It localises to the mitochondrion. The protein is Large ribosomal subunit protein bL36m (Mrpl36) of Mus musculus (Mouse).